Consider the following 506-residue polypeptide: Probable cytochrome P450 519E1 (506 aa).

Residues 1–21 (MGIGLIILYLLIGLLAYDFTK) traverse the membrane as a helical segment. C453 lines the heme pocket.

Belongs to the cytochrome P450 family. The cofactor is heme.

It localises to the membrane. The protein is Probable cytochrome P450 519E1 (cyp519E1) of Dictyostelium discoideum (Social amoeba).